The sequence spans 192 residues: Adenylate kinase (192 aa).

Residue 10-18 (GVPGVGGTT) coordinates ATP.

Belongs to the archaeal adenylate kinase family. As to quaternary structure, monomer.

The protein resides in the cytoplasm. The enzyme catalyses AMP + ATP = 2 ADP. This is Adenylate kinase from Methanococcus maripaludis (strain C5 / ATCC BAA-1333).